A 625-amino-acid polypeptide reads, in one-letter code: E3 ubiquitin-protein ligase synoviolin (625 aa).

At 1 to 4 (MVRA) the chain is on the cytoplasmic side. The chain crosses the membrane as a helical span at residues 5–25 (ALVTATSLALTGAVVAHAYFL). Over 26–40 (KHQFYPTVVYLTKSS) the chain is Lumenal. The chain crosses the membrane as a helical span at residues 41–61 (PSMAVLYIQAFVLVFLLGKLM). At 62-98 (RKVFFGQLRAAEMEHLIERSWYAVTETCLAFTVFRDD) the chain is on the cytoplasmic side. Residues 99-119 (FSPRFVALFTLLLFLKCFHWL) traverse the membrane as a helical segment. The Lumenal segment spans residues 120–135 (AEDRVDFMERSPNISW). The chain crosses the membrane as a helical span at residues 136–156 (VFHFRVLSLMVLLGVMDFLFV). Residues 157–169 (NHACHSIITRGAS) lie on the Cytoplasmic side of the membrane. The helical transmembrane segment at 170–190 (VQLVFGFEYAILMTMVLTTFI) threads the bilayer. The Lumenal portion of the chain corresponds to 191–212 (KYTLHTIDLQSENPWDNKAVYM). Residues 213–235 (LYTELFTGFIKVLLYMAFMTIMI) form a helical membrane-spanning segment. Residues 236–270 (KVHTFPLFAIRPMYLAMRQFKKAVTDAIMSRRAIR) form an interaction with p53/TP53 region. The Cytoplasmic segment spans residues 236 to 625 (KVHTFPLFAI…GNLLKLASVN (390 aa)). Residues Cys-291, Cys-294, Cys-307, His-309, His-312, Cys-315, Cys-326, and Cys-329 each contribute to the Zn(2+) site. The segment at 291–330 (CIICREEMVTGAKKLPCNHIFHSSCLRSWFQRQQTCPTCR) adopts an RING-type; atypical zinc-finger fold. Disordered regions lie at residues 337-361 (SQPNQTPAPPAAQAPAPPAPANAPI), 390-434 (PPPA…SAAP), 462-487 (FMSSMPPPPSSLSSMSEAELRELEQE), and 523-625 (LSPP…ASVN). A compositionally biased stretch (pro residues) spans 342 to 361 (TPAPPAAQAPAPPAPANAPI). Over residues 423–434 (AQSTAEAASAAP) the composition is skewed to low complexity. A compositionally biased stretch (pro residues) spans 462–471 (FMSSMPPPPS). The segment covering 523–564 (LSPPRSETNTGETSESANVESSPSTANTETAGQEIQSQSGES) has biased composition (polar residues).

Belongs to the HRD1 family. As to quaternary structure, homodimer.

The protein localises to the endoplasmic reticulum membrane. The catalysed reaction is S-ubiquitinyl-[E2 ubiquitin-conjugating enzyme]-L-cysteine + [acceptor protein]-L-lysine = [E2 ubiquitin-conjugating enzyme]-L-cysteine + N(6)-ubiquitinyl-[acceptor protein]-L-lysine.. The protein operates within protein modification; protein ubiquitination. Its function is as follows. E3 ubiquitin-protein ligase which accepts ubiquitin specifically from endoplasmic reticulum-associated UBC7 E2 ligase and transfers it to substrates, promoting their degradation. Component of the endoplasmic reticulum quality control (ERQC) system also called ER-associated degradation (ERAD) involved in ubiquitin-dependent degradation of misfolded endoplasmic reticulum proteins. Also promotes the degradation of normal but naturally short-lived proteins. Protects cells from ER stress-induced apoptosis. Sequesters p53 in the cytoplasm and promotes its degradation, thereby negatively regulating its biological function in transcription, cell cycle regulation and apoptosis. The polypeptide is E3 ubiquitin-protein ligase synoviolin (syvn1) (Danio rerio (Zebrafish)).